The following is a 348-amino-acid chain: Rhodopsin (348 aa).

N-acetylmethionine is present on methionine 1. Residues 1–36 (MNGTEGPNFYVPYSNKSGVVRSPYEEPQYYLAEPWM) lie on the Extracellular side of the membrane. N-linked (GlcNAc...) asparagine glycans are attached at residues asparagine 2 and asparagine 15. The helical transmembrane segment at 37–61 (FSCLAAYMFMLIVLGFPINFLTLYV) threads the bilayer. Over 62 to 73 (TIQHKKLRTPLN) the chain is Cytoplasmic. Residues 74–96 (YILLNLAVADLFMVICGFTTTLV) form a helical membrane-spanning segment. The Extracellular portion of the chain corresponds to 97–110 (TSLNGYFVFGTTGC). An intrachain disulfide couples cysteine 110 to cysteine 187. The chain crosses the membrane as a helical span at residues 111 to 133 (LVEGFFATTGGEVALWALVVLAI). The 'Ionic lock' involved in activated form stabilization signature appears at 134–136 (ERY). Over 134–152 (ERYIVVCKPMSNFRFGENH) the chain is Cytoplasmic. A helical transmembrane segment spans residues 153–173 (AIMGVAFTWIMALACSVPPIF). Over 174–202 (GWSRYIPEGMQCSCGIDYYTLNPEFNNES) the chain is Extracellular. Glutamate 201 lines the Zn(2+) pocket. Residues 203 to 224 (FVIYMFVVHFIIPLTVIFFCYG) form a helical membrane-spanning segment. At 225–252 (QLVFTVKEAAAQQQESATTQKAEKEVTR) the chain is on the cytoplasmic side. The helical transmembrane segment at 253–274 (MVIIMVIAFLICWVPYASVAFY) threads the bilayer. Residues 275-286 (IFTHQGSDFGPI) are Extracellular-facing. Zn(2+) is bound at residue glutamine 279. Residues 287–308 (FMTLPAFFAKSSSIYNPVIYIM) form a helical membrane-spanning segment. At lysine 296 the chain carries N6-(retinylidene)lysine. Topologically, residues 309-348 (MNKQFRNCMITTLCCGKNPLGDDEASTTASKTETSQVAPA) are cytoplasmic. 2 S-palmitoyl cysteine lipidation sites follow: cysteine 322 and cysteine 323. The tract at residues 330–348 (DDEASTTASKTETSQVAPA) is interaction with SAG. Serine 334 bears the Phosphoserine mark. 2 positions are modified to phosphothreonine: threonine 335 and threonine 336. Serine 338 carries the phosphoserine modification. Phosphothreonine occurs at positions 340 and 342. A Phosphoserine modification is found at serine 343.

It belongs to the G-protein coupled receptor 1 family. Opsin subfamily. As to quaternary structure, homodimer. May form a complex composed of RHO, GRK1 and RCVRN in a Ca(2+)-dependent manner; RCVRN prevents the interaction between GRK1 and RHO. Interacts with GRK1. Interacts (phosphorylated form) with SAG. Interacts with GNAT1. Interacts with GNAT3. SAG and G-proteins compete for a common binding site. Interacts with PRCD; the interaction promotes PRCD stability. Forms a complex with ASAP1 and ARF4. Forms a complex with ASAP1, RAB11A, Rabin8/RAB3IP, ARF4 and RAB11FIP3; the complex regulates Golgi-to-cilia rhodopsin/RHO transport in photoreceptors. Post-translationally, phosphorylated on some or all of the serine and threonine residues present in the C-terminal region. Contains one covalently linked retinal chromophore. Upon light absorption, the covalently bound 11-cis-retinal is converted to all-trans-retinal. After hydrolysis of the Schiff base and release of the covalently bound all-trans-retinal, active rhodopsin is regenerated by binding of a fresh molecule of 11-cis-retinal.

The protein resides in the membrane. The protein localises to the cell projection. Its subcellular location is the cilium. It is found in the photoreceptor outer segment. Functionally, photoreceptor required for image-forming vision at low light intensity. Required for photoreceptor cell viability after birth. Light-induced isomerization of 11-cis to all-trans retinal triggers a conformational change that activates signaling via G-proteins. Subsequent receptor phosphorylation mediates displacement of the bound G-protein alpha subunit by the arrestin SAG and terminates signaling. In Sminthopsis crassicaudata (Fat-tailed dunnart), this protein is Rhodopsin (RHO).